The primary structure comprises 220 residues: UPF0319 protein YccT (220 aa).

The first 20 residues, 1-20 (MKTGALTTFLALCLPVTVFA), serve as a signal peptide directing secretion.

This sequence belongs to the UPF0319 family.

The protein is UPF0319 protein YccT of Salmonella choleraesuis (strain SC-B67).